The primary structure comprises 210 residues: Glutathione S-transferase 2 (210 aa).

Positions 1 to 80 (MDFYYLPLSA…YLVEKYGKQN (80 aa)) constitute a GST N-terminal domain. Residues serine 9, 50–52 (HTI), and 64–66 (ESR) each bind glutathione. The GST C-terminal domain occupies 87-208 (CPKKRALINQ…AGCLEMKKYF (122 aa)).

It belongs to the GST superfamily. Theta family. Homodimer.

The catalysed reaction is RX + glutathione = an S-substituted glutathione + a halide anion + H(+). Functionally, conjugation of reduced glutathione to a wide number of exogenous and endogenous hydrophobic electrophiles. The protein is Glutathione S-transferase 2 (Gst2) of Musca domestica (House fly).